A 513-amino-acid polypeptide reads, in one-letter code: ATP synthase subunit alpha (513 aa).

Residue 169 to 176 (GDRQIGKT) participates in ATP binding.

It belongs to the ATPase alpha/beta chains family. F-type ATPases have 2 components, CF(1) - the catalytic core - and CF(0) - the membrane proton channel. CF(1) has five subunits: alpha(3), beta(3), gamma(1), delta(1), epsilon(1). CF(0) has three main subunits: a(1), b(2) and c(9-12). The alpha and beta chains form an alternating ring which encloses part of the gamma chain. CF(1) is attached to CF(0) by a central stalk formed by the gamma and epsilon chains, while a peripheral stalk is formed by the delta and b chains.

The protein resides in the cell inner membrane. The catalysed reaction is ATP + H2O + 4 H(+)(in) = ADP + phosphate + 5 H(+)(out). Its function is as follows. Produces ATP from ADP in the presence of a proton gradient across the membrane. The alpha chain is a regulatory subunit. In Shewanella woodyi (strain ATCC 51908 / MS32), this protein is ATP synthase subunit alpha.